Consider the following 319-residue polypeptide: Cytochrome c biogenesis protein CcsA (319 aa).

8 helical membrane-spanning segments follow: residues 11 to 31, 34 to 54, 71 to 91, 97 to 117, 142 to 162, 227 to 247, 254 to 274, and 288 to 308; these read VNFAFGGLLTAMLVYWSSLAF, ISGLNKLAALITLLVNIALAL, LYESLLFLAWGLTFVHLFIES, LIGAVSIPVAMFVTAFASLAL, IMMISYSILILGSLLSILFLI, IIGLGFPLLTIGIVAGAVWAN, WSWDPKETWALITWLIFAAYL, and AILASVGFLVVWICYLGVNFL.

Belongs to the CcmF/CycK/Ccl1/NrfE/CcsA family. May interact with Ccs1.

Its subcellular location is the plastid. The protein resides in the chloroplast thylakoid membrane. Its function is as follows. Required during biogenesis of c-type cytochromes (cytochrome c6 and cytochrome f) at the step of heme attachment. In Porphyra purpurea (Red seaweed), this protein is Cytochrome c biogenesis protein CcsA.